We begin with the raw amino-acid sequence, 456 residues long: Signal recognition particle 54 kDa protein (456 aa).

GTP contacts are provided by residues 104 to 111 (GLYGNGKT), 184 to 188 (DTSGR), and 242 to 245 (TKMD).

The protein belongs to the GTP-binding SRP family. SRP54 subfamily. As to quaternary structure, part of the signal recognition particle protein translocation system, which is composed of SRP and FtsY. Archaeal SRP consists of a 7S RNA molecule of 300 nucleotides and two protein subunits: SRP54 and SRP19.

The protein localises to the cytoplasm. It carries out the reaction GTP + H2O = GDP + phosphate + H(+). Functionally, involved in targeting and insertion of nascent membrane proteins into the cytoplasmic membrane. Binds to the hydrophobic signal sequence of the ribosome-nascent chain (RNC) as it emerges from the ribosomes. The SRP-RNC complex is then targeted to the cytoplasmic membrane where it interacts with the SRP receptor FtsY. This is Signal recognition particle 54 kDa protein from Thermoplasma acidophilum (strain ATCC 25905 / DSM 1728 / JCM 9062 / NBRC 15155 / AMRC-C165).